Here is a 292-residue protein sequence, read N- to C-terminus: Bifunctional protein FolD (292 aa).

Residues 171–173 (GAS), I196, and I237 contribute to the NADP(+) site.

The protein belongs to the tetrahydrofolate dehydrogenase/cyclohydrolase family. As to quaternary structure, homodimer.

The enzyme catalyses (6R)-5,10-methylene-5,6,7,8-tetrahydrofolate + NADP(+) = (6R)-5,10-methenyltetrahydrofolate + NADPH. It catalyses the reaction (6R)-5,10-methenyltetrahydrofolate + H2O = (6R)-10-formyltetrahydrofolate + H(+). It functions in the pathway one-carbon metabolism; tetrahydrofolate interconversion. Its function is as follows. Catalyzes the oxidation of 5,10-methylenetetrahydrofolate to 5,10-methenyltetrahydrofolate and then the hydrolysis of 5,10-methenyltetrahydrofolate to 10-formyltetrahydrofolate. This is Bifunctional protein FolD from Helicobacter acinonychis (strain Sheeba).